Consider the following 231-residue polypeptide: Homeobox protein EMX1 (231 aa).

The homeobox DNA-binding region spans 133–192; it reads PKRIRTAFSPSQLLRLERAFEKNHYVVGAERKQLANSLSLSETQVKVWFQNRRTKYKRQK. Positions 193–231 are disordered; it reads LEEEGPECTQKKKGNHHINRWRIATKQTGSEDIDVMSDA. Positions 203–212 are enriched in basic residues; it reads KKKGNHHINR.

The protein belongs to the EMX homeobox family.

The protein resides in the nucleus. May function in combinations with OTX1/2 to specify cell fates in the developing central nervous system. The sequence is that of Homeobox protein EMX1 (emx1) from Danio rerio (Zebrafish).